The sequence spans 218 residues: Probable transaldolase (218 aa).

Residue Lys87 is the Schiff-base intermediate with substrate of the active site.

The protein belongs to the transaldolase family. Type 3B subfamily.

It is found in the cytoplasm. The enzyme catalyses D-sedoheptulose 7-phosphate + D-glyceraldehyde 3-phosphate = D-erythrose 4-phosphate + beta-D-fructose 6-phosphate. Its pathway is carbohydrate degradation; pentose phosphate pathway; D-glyceraldehyde 3-phosphate and beta-D-fructose 6-phosphate from D-ribose 5-phosphate and D-xylulose 5-phosphate (non-oxidative stage): step 2/3. In terms of biological role, transaldolase is important for the balance of metabolites in the pentose-phosphate pathway. The polypeptide is Probable transaldolase (Phocaeicola vulgatus (strain ATCC 8482 / DSM 1447 / JCM 5826 / CCUG 4940 / NBRC 14291 / NCTC 11154) (Bacteroides vulgatus)).